We begin with the raw amino-acid sequence, 300 residues long: Acetylglutamate kinase (300 aa).

Substrate-binding positions include 67–68 (GG), R89, and N194.

Belongs to the acetylglutamate kinase family. ArgB subfamily.

Its subcellular location is the cytoplasm. It carries out the reaction N-acetyl-L-glutamate + ATP = N-acetyl-L-glutamyl 5-phosphate + ADP. The protein operates within amino-acid biosynthesis; L-arginine biosynthesis; N(2)-acetyl-L-ornithine from L-glutamate: step 2/4. Functionally, catalyzes the ATP-dependent phosphorylation of N-acetyl-L-glutamate. The sequence is that of Acetylglutamate kinase from Saccharophagus degradans (strain 2-40 / ATCC 43961 / DSM 17024).